Consider the following 148-residue polypeptide: Large ribosomal subunit protein uL13 (148 aa).

It belongs to the universal ribosomal protein uL13 family. Part of the 50S ribosomal subunit.

Its function is as follows. This protein is one of the early assembly proteins of the 50S ribosomal subunit, although it is not seen to bind rRNA by itself. It is important during the early stages of 50S assembly. This is Large ribosomal subunit protein uL13 from Lacticaseibacillus casei (strain BL23) (Lactobacillus casei).